Consider the following 235-residue polypeptide: 2-C-methyl-D-erythritol 4-phosphate cytidylyltransferase (235 aa).

Belongs to the IspD/TarI cytidylyltransferase family. IspD subfamily.

The enzyme catalyses 2-C-methyl-D-erythritol 4-phosphate + CTP + H(+) = 4-CDP-2-C-methyl-D-erythritol + diphosphate. Its pathway is isoprenoid biosynthesis; isopentenyl diphosphate biosynthesis via DXP pathway; isopentenyl diphosphate from 1-deoxy-D-xylulose 5-phosphate: step 2/6. Functionally, catalyzes the formation of 4-diphosphocytidyl-2-C-methyl-D-erythritol from CTP and 2-C-methyl-D-erythritol 4-phosphate (MEP). The sequence is that of 2-C-methyl-D-erythritol 4-phosphate cytidylyltransferase from Pseudomonas fluorescens (strain ATCC BAA-477 / NRRL B-23932 / Pf-5).